The primary structure comprises 228 residues: Cytidylate kinase (228 aa).

12-20 provides a ligand contact to ATP; that stretch reads GPSGAGKGT.

The protein belongs to the cytidylate kinase family. Type 1 subfamily.

It is found in the cytoplasm. The enzyme catalyses CMP + ATP = CDP + ADP. The catalysed reaction is dCMP + ATP = dCDP + ADP. The polypeptide is Cytidylate kinase (Photobacterium profundum (strain SS9)).